A 153-amino-acid chain; its full sequence is Flagellar assembly factor FliW (153 aa).

Belongs to the FliW family. As to quaternary structure, interacts with translational regulator CsrA and flagellin(s).

Its subcellular location is the cytoplasm. In terms of biological role, acts as an anti-CsrA protein, binds CsrA and prevents it from repressing translation of its target genes, one of which is flagellin. Binds to flagellin and participates in the assembly of the flagellum. In Leptospira biflexa serovar Patoc (strain Patoc 1 / Ames), this protein is Flagellar assembly factor FliW.